We begin with the raw amino-acid sequence, 900 residues long: Endoglucanase H (900 aa).

The N-terminal stretch at 1–44 (MKKRLLVSFLVLSIIVGLLSFQSLGNYNSGLKIGAWVGTQPSES) is a signal peptide. A GH26 domain is found at 45–298 (AIKSFQELQG…NSSPEALAAY (254 aa)). Residue Glu-131 is the Proton donor of the active site. The active-site Nucleophile is the Glu-244. Positions 300–630 (EAIGAGSSNP…DTEILNALFN (331 aa)) are catalytic. Residues 303 to 326 (GAGSSNPTPTPTWTSTPPSSSPKA) form a disordered region. Residues 306 to 324 (SSNPTPTPTWTSTPPSSSP) show a composition bias toward low complexity. Glu-460 (proton donor) is an active-site residue. The active-site Nucleophile is the Glu-565. Positions 655–900 (AVGEKMLDDF…LLKAISEIPI (246 aa)) constitute a CBM11 domain. In terms of domain architecture, Dockerin spans 827 to 900 (PSIKHGDLNF…LLKAISEIPI (74 aa)).

It in the N-terminal section; belongs to the glycosyl hydrolase 5 (cellulase A) family. This sequence in the C-terminal section; belongs to the glycosyl hydrolase 26 family.

The catalysed reaction is Endohydrolysis of (1-&gt;4)-beta-D-glucosidic linkages in cellulose, lichenin and cereal beta-D-glucans.. In terms of biological role, this enzyme catalyzes the endohydrolysis of 1,4-beta-glucosidic linkages in cellulose, lichenin and cereal beta-D-glucans. This is Endoglucanase H (celH) from Acetivibrio thermocellus (strain ATCC 27405 / DSM 1237 / JCM 9322 / NBRC 103400 / NCIMB 10682 / NRRL B-4536 / VPI 7372) (Clostridium thermocellum).